The primary structure comprises 296 residues: Nucleotide-binding protein MGAS2096_Spy0550 (296 aa).

G13–T20 contacts ATP. D63–S66 contributes to the GTP binding site.

Belongs to the RapZ-like family.

Functionally, displays ATPase and GTPase activities. This chain is Nucleotide-binding protein MGAS2096_Spy0550, found in Streptococcus pyogenes serotype M12 (strain MGAS2096).